A 340-amino-acid polypeptide reads, in one-letter code: Phosphate acyltransferase (340 aa).

This sequence belongs to the PlsX family. As to quaternary structure, homodimer. Probably interacts with PlsY.

It is found in the cytoplasm. It catalyses the reaction a fatty acyl-[ACP] + phosphate = an acyl phosphate + holo-[ACP]. It participates in lipid metabolism; phospholipid metabolism. Catalyzes the reversible formation of acyl-phosphate (acyl-PO(4)) from acyl-[acyl-carrier-protein] (acyl-ACP). This enzyme utilizes acyl-ACP as fatty acyl donor, but not acyl-CoA. The chain is Phosphate acyltransferase from Pseudomonas savastanoi pv. phaseolicola (strain 1448A / Race 6) (Pseudomonas syringae pv. phaseolicola (strain 1448A / Race 6)).